A 1551-amino-acid chain; its full sequence is Transient receptor potential cation channel subfamily M member-like 2 (1551 aa).

Over 1-714 (MGKDSFTPLY…WMGTMAMNTR (714 aa)) the chain is Cytoplasmic. An intramembrane segment occupies 715 to 730 (WWKVLVCLYLPVLIFP). Residues 731–837 (IIYFVPDEQH…DRIMHFYSAP (107 aa)) are Cytoplasmic-facing. The disordered stretch occupies residues 744-767 (AAEREHQKSLNQKSSKVKSHKEKN). The chain crosses the membrane as a helical span at residues 838-858 (FSKFVGNVVGYLAFIFLYAYV). At 859–877 (VLFNFPRFDPAKTLGGIHP) the chain is on the extracellular side. A helical membrane pass occupies residues 878–898 (TEIVLYFWVFTILIEEIRQLA). Ca(2+) is bound by residues glutamate 893 and glutamine 896. Over 899-916 (AKPPKYIKDKVSVYFSDT) the chain is Cytoplasmic. Residues 917 to 937 (WNFVDIFSLTVFIIAIILRFF) form a helical membrane-spanning segment. Ca(2+)-binding residues include asparagine 918 and aspartate 921. Topologically, residues 938 to 947 (TNSRIFTASR) are extracellular. The helical transmembrane segment at 948–968 (IILSLDIIFFIVRSLQIFSVN) threads the bilayer. Residues 969 to 980 (RLLGPKLVMIQK) lie on the Cytoplasmic side of the membrane. Residues 981 to 1001 (MMQDLAQFIIILAVFTIAYGI) form a helical membrane-spanning segment. Residues 1002-1018 (ALHAVMFPSPGIYARNN) are Extracellular-facing. Residue asparagine 1017 is glycosylated (N-linked (GlcNAc...) asparagine). Positions 1019-1034 (TWVTITSVVQYPYWQM) form an intramembrane region, pore-forming. Residues 1035–1037 (YGE) carry the Selectivity filter motif. The Extracellular segment spans residues 1035–1059 (YGELFLDEIQGEKPKEFGEVDPDGR). Residues 1040-1042 (LDE) carry the Prevents fast channel inactivation motif. A helical transmembrane segment spans residues 1060–1080 (WLSPLLLAIYMVFTNILLLNL). At 1081–1116 (LIAIFNYTFERVQEDSDKVWKFQRYDLVQEYHSRPV) the chain is on the cytoplasmic side. The stretch at 1117–1135 (FAPPLVLLGHILIFIRWVW) is an intramembrane region. Residues 1136-1551 (RMCRCGHPPR…KVAKMRDAAF (416 aa)) lie on the Cytoplasmic side of the membrane. The stretch at 1184–1209 (LEERVRALGDRVDCINSQLNRVLDSM) forms a coiled coil. One can recognise a Nudix hydrolase domain in the interval 1394 to 1546 (WKRTSAGVML…VSILEKVAKM (153 aa)). The Nudix box motif lies at 1428-1449 (GMVEPGQLVTQALKAEFGEEAM).

It belongs to the transient receptor (TC 1.A.4) family. LTrpC subfamily. TRPM2 sub-subfamily. Homotetramer.

The protein resides in the cell membrane. With respect to regulation, activated by phosphatidylinositol 4,5-bisphosphate (PIP2). Although PIP2 is essential for the channel activation, its contribution to the level of channel activity is minimal. Also activated by diphosphate ribose-2'-phosphate. Upon binding to ADPR, channel activation requires only a short initial cytosolic Ca(2+) increase, then the activation is sustained by the uptake of extracellular Ca(2+). Activated by 2-aminoethyl diphenylborinate (2-APB) in a Ca(2+)-dependent manner. 2-APB prevents the inactivation of the channel. Its function is as follows. Nonselective, voltage-independent cation channel that mediates Ca(2+) and to a lesser extent Na(+) influx, leading to increased cytoplasmic Ca(2+) levels. Functions as a ligand-gated ion channel. Binding of ADP-ribose causes a conformation change; the channel is primed but still requires Ca(2+) binding to trigger channel opening. May have ADP-ribose pyrophosphatase activity which reduces ADP-ribose levels induced by oxidative stress, thus preventing the channel activation by reactive oxygen species. The protein is Transient receptor potential cation channel subfamily M member-like 2 of Nematostella vectensis (Starlet sea anemone).